The chain runs to 512 residues: Monocarboxylate transporter 10 (512 aa).

The segment at 1–44 (MVPSQEEPAAERETNEAQPPGPAPSDDAPLPGPGPSDVSDVAAE) is disordered. Topologically, residues 1-63 (MVPSQEEPAA…AGSEPPVPPE (63 aa)) are cytoplasmic. A helical transmembrane segment spans residues 64 to 84 (GGWGWLVMLAAMWCNGSVFGI). Residues 85-111 (QNAYGVLFVSMLDTFKAKDDDNMAFKT) are Extracellular-facing. The chain crosses the membrane as a helical span at residues 112 to 132 (AWVGSLSMGMIFFCCPIVSVF). Over 133-141 (TDMFGCRRT) the chain is Cytoplasmic. The helical transmembrane segment at 142–162 (AVVGAAVGFIGLMSSSFVSSI) threads the bilayer. Topologically, residues 163-168 (EPLYLT) are extracellular. Residues 169–189 (YGIIFACGCSFAYQPSLVILG) traverse the membrane as a helical segment. Topologically, residues 190–201 (HYFKKRLGLVNG) are cytoplasmic. Residues 202–222 (IVTAGSSVFTILLPLLLGNLI) traverse the membrane as a helical segment. The Extracellular portion of the chain corresponds to 223 to 232 (SSVKLFNTLR). The chain crosses the membrane as a helical span at residues 233–253 (ILCIFMFVLFLAGFTYRPLVP). Residues 254-291 (STKEKESGGSRSSFFSRRKLSPPKKVFNFALFKETTYA) lie on the Cytoplasmic side of the membrane. At Ser260 the chain carries Phosphoserine. A helical transmembrane segment spans residues 292-312 (VWAAGIPLALFGYFVPYVHLM). At 313 to 326 (NHVKERFQDVNNKE) the chain is on the extracellular side. A helical membrane pass occupies residues 327–347 (VLFMCIGITSGVGRLLFGRIA). At 348–362 (DYLPGVKKVYLQVLS) the chain is on the cytoplasmic side. The helical transmembrane segment at 363–383 (FFFIGLMSMMIPLCSAFGALI) threads the bilayer. Position 384 (Ala384) is a topological domain, extracellular. A helical membrane pass occupies residues 385–405 (VCLAMGLFDGCFISIMAPIAF). Residues 406-416 (ELVGPQDASQA) are Cytoplasmic-facing. A helical transmembrane segment spans residues 417–437 (IGFLLGFMSIPMTVGPPIAGL). At 438–448 (LHDKLGTYDVA) the chain is on the extracellular side. The chain crosses the membrane as a helical span at residues 449-469 (FYLAGIPPFVGGVVLCLIPWI). The Cytoplasmic portion of the chain corresponds to 470 to 512 (HSKKQRKISKNAGGEKMEKMLENQSSLLSGSSGIFKKDSASII). Phosphoserine is present on residues Ser495, Ser498, Ser500, and Ser501.

It belongs to the major facilitator superfamily. Monocarboxylate porter (TC 2.A.1.13) family. Not N-glycosylated. In terms of tissue distribution, highly expressed in small intestine, particularly in jejunum and ileum, scarcely in colon and substantially in kidney, liver and skeletal muscle. In the brain expression is low and appears to be restricted to a subset of neurons, microglia cells, and oligodendrocytes.

The protein resides in the cell membrane. Its subcellular location is the basolateral cell membrane. It carries out the reaction L-tryptophan(in) = L-tryptophan(out). It catalyses the reaction L-tyrosine(in) = L-tyrosine(out). The enzyme catalyses L-phenylalanine(in) = L-phenylalanine(out). The catalysed reaction is 3,3',5-triiodo-L-thyronine(out) = 3,3',5-triiodo-L-thyronine(in). It carries out the reaction L-thyroxine(out) = L-thyroxine(in). Its function is as follows. Sodium- and proton-independent thyroid hormones and aromatic acids transporter. Mediates both uptake and efflux of 3,5,3'-triiodothyronine (T3) and 3,5,3',5'-tetraiodothyronine (T4) with high affinity, suggesting a role in the homeostasis of thyroid hormone levels. Responsible for low affinity bidirectional transport of the aromatic amino acids, such as phenylalanine, tyrosine, tryptophan and L-3,4-dihydroxyphenylalanine (L-dopa). Plays an important role in homeostasis of aromatic amino acids. The sequence is that of Monocarboxylate transporter 10 (Slc16a10) from Mus musculus (Mouse).